The sequence spans 83 residues: Large ribosomal subunit protein bL31B (83 aa).

It belongs to the bacterial ribosomal protein bL31 family. Type B subfamily. In terms of assembly, part of the 50S ribosomal subunit.

The chain is Large ribosomal subunit protein bL31B from Bacteroides fragilis (strain ATCC 25285 / DSM 2151 / CCUG 4856 / JCM 11019 / LMG 10263 / NCTC 9343 / Onslow / VPI 2553 / EN-2).